Here is a 476-residue protein sequence, read N- to C-terminus: Glycogen synthase (476 aa).

Lys15 contributes to the ADP-alpha-D-glucose binding site.

Belongs to the glycosyltransferase 1 family. Bacterial/plant glycogen synthase subfamily.

The catalysed reaction is [(1-&gt;4)-alpha-D-glucosyl](n) + ADP-alpha-D-glucose = [(1-&gt;4)-alpha-D-glucosyl](n+1) + ADP + H(+). Its pathway is glycan biosynthesis; glycogen biosynthesis. Its function is as follows. Synthesizes alpha-1,4-glucan chains using ADP-glucose. The sequence is that of Glycogen synthase from Streptococcus agalactiae serotype III (strain NEM316).